The primary structure comprises 430 residues: Adenylosuccinate synthetase (430 aa).

GTP-binding positions include Gly13–Lys19 and Gly41–Thr43. Asp14 (proton acceptor) is an active-site residue. Residues Asp14 and Gly41 each coordinate Mg(2+). IMP is bound by residues Asp14–Lys17, Asn39–His42, Thr130, Arg144, Gln225, Thr240, and Arg304. The active-site Proton donor is His42. Residue Ala300–Arg306 coordinates substrate. GTP contacts are provided by residues Arg306, Lys332–Asp334, and Ser414–Gly416.

This sequence belongs to the adenylosuccinate synthetase family. In terms of assembly, homodimer. Mg(2+) is required as a cofactor.

It is found in the cytoplasm. It catalyses the reaction IMP + L-aspartate + GTP = N(6)-(1,2-dicarboxyethyl)-AMP + GDP + phosphate + 2 H(+). Its pathway is purine metabolism; AMP biosynthesis via de novo pathway; AMP from IMP: step 1/2. Plays an important role in the de novo pathway of purine nucleotide biosynthesis. Catalyzes the first committed step in the biosynthesis of AMP from IMP. The chain is Adenylosuccinate synthetase from Pseudomonas syringae pv. tomato (strain ATCC BAA-871 / DC3000).